The primary structure comprises 123 residues: UPF0102 protein VSAL_I2655 (123 aa).

It belongs to the UPF0102 family.

The sequence is that of UPF0102 protein VSAL_I2655 from Aliivibrio salmonicida (strain LFI1238) (Vibrio salmonicida (strain LFI1238)).